Consider the following 308-residue polypeptide: Elongation factor Ts (308 aa).

Residues 80–83 (TDFV) are involved in Mg(2+) ion dislocation from EF-Tu.

The protein belongs to the EF-Ts family.

Its subcellular location is the cytoplasm. Functionally, associates with the EF-Tu.GDP complex and induces the exchange of GDP to GTP. It remains bound to the aminoacyl-tRNA.EF-Tu.GTP complex up to the GTP hydrolysis stage on the ribosome. This is Elongation factor Ts from Verminephrobacter eiseniae (strain EF01-2).